A 284-amino-acid polypeptide reads, in one-letter code: Serine/arginine-rich splicing factor RS2Z32 (284 aa).

The 71-residue stretch at 11–81 (TRLYVGRLSS…SRITVEASRG (71 aa)) folds into the RRM domain. The interval 74–97 (ITVEASRGAPRGSRDNGSRGPPPG) is disordered. 2 CCHC-type zinc fingers span residues 99-116 (GRCF…DCTA) and 121-138 (NKCY…NCKN). The disordered stretch occupies residues 132–284 (IERNCKNSPS…RPSPKGSESP (153 aa)). A compositionally biased stretch (basic residues) spans 159–180 (RSPRRRRSPSRSRSYSRGRSYS). 3 positions are modified to phosphoserine: Ser-166, Ser-168, and Ser-184. Over residues 186–203 (VRREKSVEDRSRSPKAME) the composition is skewed to basic and acidic residues. Phosphoserine occurs at positions 205, 207, 214, 216, 225, 235, 255, 265, 277, and 281. Over residues 209 to 236 (KGRDQSLSPDRKVIDASPKRGSDYDGSP) the composition is skewed to basic and acidic residues.

It belongs to the splicing factor SR family. RS2Z subfamily. In terms of assembly, component of the spliceosome. In terms of processing, extensively phosphorylated on serine residues in the RS domain.

The protein resides in the nucleus. Its function is as follows. Probably involved in intron recognition and spliceosome assembly. In Arabidopsis thaliana (Mouse-ear cress), this protein is Serine/arginine-rich splicing factor RS2Z32 (RS2Z32).